Reading from the N-terminus, the 629-residue chain is Arginine--tRNA ligase (629 aa).

The 'HIGH' region signature appears at 128-138 (VNPTKPLHMGH).

This sequence belongs to the class-I aminoacyl-tRNA synthetase family.

The protein localises to the cytoplasm. The enzyme catalyses tRNA(Arg) + L-arginine + ATP = L-arginyl-tRNA(Arg) + AMP + diphosphate. The chain is Arginine--tRNA ligase from Pyrococcus furiosus (strain ATCC 43587 / DSM 3638 / JCM 8422 / Vc1).